The sequence spans 251 residues: Imidazole glycerol phosphate synthase subunit HisF (251 aa).

Active-site residues include Asp10 and Asp129.

The protein belongs to the HisA/HisF family. Heterodimer of HisH and HisF.

It is found in the cytoplasm. It carries out the reaction 5-[(5-phospho-1-deoxy-D-ribulos-1-ylimino)methylamino]-1-(5-phospho-beta-D-ribosyl)imidazole-4-carboxamide + L-glutamine = D-erythro-1-(imidazol-4-yl)glycerol 3-phosphate + 5-amino-1-(5-phospho-beta-D-ribosyl)imidazole-4-carboxamide + L-glutamate + H(+). The protein operates within amino-acid biosynthesis; L-histidine biosynthesis; L-histidine from 5-phospho-alpha-D-ribose 1-diphosphate: step 5/9. In terms of biological role, IGPS catalyzes the conversion of PRFAR and glutamine to IGP, AICAR and glutamate. The HisF subunit catalyzes the cyclization activity that produces IGP and AICAR from PRFAR using the ammonia provided by the HisH subunit. The sequence is that of Imidazole glycerol phosphate synthase subunit HisF from Cutibacterium acnes (strain DSM 16379 / KPA171202) (Propionibacterium acnes).